A 453-amino-acid polypeptide reads, in one-letter code: UDP-glucosyltransferase avaP (453 aa).

The protein belongs to the UDP-glycosyltransferase family.

It functions in the pathway secondary metabolite biosynthesis. Its function is as follows. UDP-glucosyltransferase; part of the cluster that mediates the biosynthesis of a highly modified cyclo-arginine-tryptophan dipeptide (cRW). The first step of the pathway is perfornmed by the arginine-containing cyclodipeptide synthase (RCPDS) avaA that acts as the scaffold-generating enzyme and is responsible for formation of the cyclo-Arg-Trp (cRW) diketopiperazine. AvaB then acts as a multifunctional flavoenzyme that is responsible for generating the cyclo-Arg-formylkynurenine DKP, which can be deformylated by avaC. AvaB then further catalyzes an additional N-oxidation followed by cyclization and dehydration. The next step is an N-acetylation of the guanidine group catalyzed by the arginine N-acetyltransferase avaD. The roles of the additional enzymes identified within the ava cluster still have to be determined. In Aspergillus versicolor, this protein is UDP-glucosyltransferase avaP.